Consider the following 315-residue polypeptide: Putative olfactory receptor 2I1 (315 aa).

At 1–24 (MKANYSAEERFLLLGFSDWPSLQP) the chain is on the extracellular side. A helical transmembrane segment spans residues 25 to 48 (VLFALVLLCYLLTLTGNSALVLLA). Residues 49 to 56 (VRDPRLHT) are Cytoplasmic-facing. A helical transmembrane segment spans residues 57–78 (PMYYFLCHLALVDAGFTTSVVP). Residues 79-99 (PLLANLRGPALWLPRSHCTAQ) are Extracellular-facing. A disulfide bridge connects residues Cys-96 and Cys-188. The chain crosses the membrane as a helical span at residues 100-119 (LCASLALGSAECVLLAVMAL). Over 120 to 138 (DRAAAVCRPLRYAGLVSPR) the chain is Cytoplasmic. Residues 139-157 (LCRTLASASWLSGLTNSVA) traverse the membrane as a helical segment. At 158 to 195 (QTALLAERPLCAPRLLDHFICELPALLKLACGGDGDTT) the chain is on the extracellular side. Residues 196 to 219 (ENQMFAARVVILLLPFAVILASYG) traverse the membrane as a helical segment. Over 220 to 236 (AVARAVCCMRFSGGRRR) the chain is Cytoplasmic. Residues 237–259 (AVGTCGSHLTAVCLFYGSAIYTY) form a helical membrane-spanning segment. Residues 260 to 272 (LQPAQRYNQARGK) are Extracellular-facing. A helical membrane pass occupies residues 273 to 292 (FVSLFYTVVTPALNPLIYTL). Residues 293–315 (RNKKVKGAARRLLRSLGRGQAGQ) are Cytoplasmic-facing.

It belongs to the G-protein coupled receptor 1 family.

The protein localises to the cell membrane. Its function is as follows. Odorant receptor. The chain is Putative olfactory receptor 2I1 from Homo sapiens (Human).